A 666-amino-acid polypeptide reads, in one-letter code: Asperfuranone cluster transcription factor afoA (666 aa).

A DNA-binding region (zn(2)-C6 fungal-type) is located at residues 16 to 43 (CEECRRRKARCDRVRPKCGFCTENELQC). Disordered regions lie at residues 184–206 (LSFD…STTR) and 347–373 (AGSD…GENA). The span at 353-369 (LSPPSSSPPSSLTLSPS) shows a compositional bias: low complexity.

Its subcellular location is the nucleus. In terms of biological role, transcription factor that regulates the expression of the gene cluster that mediates the biosynthesis of asperfuranone, a probable antitumor agent. The chain is Asperfuranone cluster transcription factor afoA from Emericella nidulans (strain FGSC A4 / ATCC 38163 / CBS 112.46 / NRRL 194 / M139) (Aspergillus nidulans).